A 108-amino-acid polypeptide reads, in one-letter code: MAAPCLLRQGRAGALKTMLQEAQVFRGLASTVSLSAESGKSEKGQPQNSKKQSPPKKPAPVPAEPFDNTTYKNLQHHDYSTYTFLDLNLELSKFRMPQPSSGRESPRH.

The transit peptide at 1-34 (MAAPCLLRQGRAGALKTMLQEAQVFRGLASTVSL) directs the protein to the mitochondrion. The segment at 33-72 (SLSAESGKSEKGQPQNSKKQSPPKKPAPVPAEPFDNTTYK) is disordered. Phosphoserine is present on Ser105.

This sequence belongs to the complex I NDUFV3 subunit family. Complex I is composed of 45 different subunits. This is a component of the flavoprotein-sulfur (FP) fragment of the enzyme.

The protein resides in the mitochondrion inner membrane. Its function is as follows. Accessory subunit of the mitochondrial membrane respiratory chain NADH dehydrogenase (Complex I), that is believed not to be involved in catalysis. Complex I functions in the transfer of electrons from NADH to the respiratory chain. The immediate electron acceptor for the enzyme is believed to be ubiquinone. May be the terminally assembled subunit of Complex I. This chain is NADH dehydrogenase [ubiquinone] flavoprotein 3, mitochondrial (NDUFV3), found in Homo sapiens (Human).